The primary structure comprises 218 residues: Molybdenum cofactor guanylyltransferase (218 aa).

GTP is bound by residues 16–18 (LAG), Lys-28, Asn-56, Asp-74, and Asp-109. Asp-109 provides a ligand contact to Mg(2+).

Belongs to the MobA family. As to quaternary structure, monomer. It depends on Mg(2+) as a cofactor.

It localises to the cytoplasm. It carries out the reaction Mo-molybdopterin + GTP + H(+) = Mo-molybdopterin guanine dinucleotide + diphosphate. Its function is as follows. Transfers a GMP moiety from GTP to Mo-molybdopterin (Mo-MPT) cofactor (Moco or molybdenum cofactor) to form Mo-molybdopterin guanine dinucleotide (Mo-MGD) cofactor. This is Molybdenum cofactor guanylyltransferase from Rhizobium meliloti (strain 1021) (Ensifer meliloti).